The following is a 225-amino-acid chain: Small ribosomal subunit protein uS2 (225 aa).

Belongs to the universal ribosomal protein uS2 family.

This chain is Small ribosomal subunit protein uS2, found in Metallosphaera sedula (strain ATCC 51363 / DSM 5348 / JCM 9185 / NBRC 15509 / TH2).